The primary structure comprises 505 residues: N-succinylglutamate 5-semialdehyde dehydrogenase (505 aa).

Position 234-239 (234-239 (GSAHTG)) interacts with NAD(+). Active-site residues include Glu257 and Cys291.

It belongs to the aldehyde dehydrogenase family. AstD subfamily.

The catalysed reaction is N-succinyl-L-glutamate 5-semialdehyde + NAD(+) + H2O = N-succinyl-L-glutamate + NADH + 2 H(+). The protein operates within amino-acid degradation; L-arginine degradation via AST pathway; L-glutamate and succinate from L-arginine: step 4/5. In terms of biological role, catalyzes the NAD-dependent reduction of succinylglutamate semialdehyde into succinylglutamate. The chain is N-succinylglutamate 5-semialdehyde dehydrogenase from Yersinia pseudotuberculosis serotype IB (strain PB1/+).